The primary structure comprises 165 residues: Acireductone dioxygenase (165 aa).

Fe(2+) is bound by residues His-90, His-92, Glu-96, and His-134. Ni(2+) contacts are provided by His-90, His-92, Glu-96, and His-134.

This sequence belongs to the acireductone dioxygenase (ARD) family. In terms of assembly, monomer. Fe(2+) serves as cofactor. Ni(2+) is required as a cofactor.

The enzyme catalyses 1,2-dihydroxy-5-(methylsulfanyl)pent-1-en-3-one + O2 = 3-(methylsulfanyl)propanoate + CO + formate + 2 H(+). The catalysed reaction is 1,2-dihydroxy-5-(methylsulfanyl)pent-1-en-3-one + O2 = 4-methylsulfanyl-2-oxobutanoate + formate + 2 H(+). The protein operates within amino-acid biosynthesis; L-methionine biosynthesis via salvage pathway; L-methionine from S-methyl-5-thio-alpha-D-ribose 1-phosphate: step 5/6. Its function is as follows. Catalyzes 2 different reactions between oxygen and the acireductone 1,2-dihydroxy-3-keto-5-methylthiopentene (DHK-MTPene) depending upon the metal bound in the active site. Fe-containing acireductone dioxygenase (Fe-ARD) produces formate and 2-keto-4-methylthiobutyrate (KMTB), the alpha-ketoacid precursor of methionine in the methionine recycle pathway. Ni-containing acireductone dioxygenase (Ni-ARD) produces methylthiopropionate, carbon monoxide and formate, and does not lie on the methionine recycle pathway. This is Acireductone dioxygenase from Rhodopseudomonas palustris (strain TIE-1).